A 545-amino-acid chain; its full sequence is Sulfite oxidase, mitochondrial (545 aa).

A mitochondrion-targeting transit peptide spans Met-1 to Gln-79. The 80-residue stretch at Thr-82–Asn-161 folds into the Cytochrome b5 heme-binding domain. A heme b-binding site is contributed by His-118. Ser-123 is modified (phosphoserine). 3 residues coordinate heme b: His-143, Gln-145, and His-147. Positions Lys-165–Asp-174 are hinge. The moco domain stretch occupies residues Pro-175–Lys-401. Residues Phe-215 to His-219, Cys-264, Asp-322, His-361, Arg-366, and His-377 to Lys-379 contribute to the Mo-molybdopterin site. Residues Gly-402 to Arg-538 form a homodimerization region.

As to quaternary structure, homodimer. Requires heme b as cofactor. It depends on Mo-molybdopterin as a cofactor.

The protein resides in the mitochondrion intermembrane space. It catalyses the reaction sulfite + O2 + H2O = sulfate + H2O2. The protein operates within energy metabolism; sulfur metabolism. Catalyzes the oxidation of sulfite to sulfate, the terminal reaction in the oxidative degradation of sulfur-containing amino acids. The protein is Sulfite oxidase, mitochondrial (SUOX) of Homo sapiens (Human).